The primary structure comprises 183 residues: ATP synthase subunit b, chloroplastic (183 aa).

Residues Asp-28–Leu-48 form a helical membrane-spanning segment.

The protein belongs to the ATPase B chain family. F-type ATPases have 2 components, F(1) - the catalytic core - and F(0) - the membrane proton channel. F(1) has five subunits: alpha(3), beta(3), gamma(1), delta(1), epsilon(1). F(0) has four main subunits: a(1), b(1), b'(1) and c(10-14). The alpha and beta chains form an alternating ring which encloses part of the gamma chain. F(1) is attached to F(0) by a central stalk formed by the gamma and epsilon chains, while a peripheral stalk is formed by the delta, b and b' chains.

It is found in the plastid. Its subcellular location is the chloroplast thylakoid membrane. Its function is as follows. F(1)F(0) ATP synthase produces ATP from ADP in the presence of a proton or sodium gradient. F-type ATPases consist of two structural domains, F(1) containing the extramembraneous catalytic core and F(0) containing the membrane proton channel, linked together by a central stalk and a peripheral stalk. During catalysis, ATP synthesis in the catalytic domain of F(1) is coupled via a rotary mechanism of the central stalk subunits to proton translocation. Component of the F(0) channel, it forms part of the peripheral stalk, linking F(1) to F(0). The chain is ATP synthase subunit b, chloroplastic from Pyropia yezoensis (Susabi-nori).